The following is a 3550-amino-acid chain: Zinc finger homeobox protein 4 (3550 aa).

An N-acetylmethionine modification is found at Met1. 3 disordered regions span residues 1-54 (METC…LKTD), 426-479 (HLSS…AYSN), and 521-614 (TSSS…IECP). Over residues 9–20 (ISRQENGQSTSK) the composition is skewed to polar residues. Composition is skewed to basic and acidic residues over residues 39–54 (EPDR…LKTD) and 433–451 (KMSE…KEST). Over residues 467–479 (EPGDEDEEDAYSN) the composition is skewed to acidic residues. Polar residues-rich tracts occupy residues 542 to 553 (GRSNGNVTNSYS) and 566 to 576 (RDGTTAAPSET). 3 consecutive C2H2-type zinc fingers follow at residues 611–634 (IECP…TMMH), 642–665 (LKCP…KEKH), and 697–721 (FRCE…SDKH). The segment at 739–763 (HSAPTPNTSLSGCGTPSPSKPKQKP) is disordered. Over residues 742-752 (PTPNTSLSGCG) the composition is skewed to polar residues. 4 C2H2-type zinc fingers span residues 765-787 (RRCE…MTSE), 915-939 (YQCK…TDKH), 971-993 (LKCN…TTNH), and 1019-1043 (YYCA…SVKH). A disordered region spans residues 1100–1142 (KAASEEPSEDAGDPLKPPTVAEDDEKEAHKRDNSEGKISTKDP). Residues 1125-1142 (KEAHKRDNSEGKISTKDP) are compositionally biased toward basic and acidic residues. Lys1165 is covalently cross-linked (Glycyl lysine isopeptide (Lys-Gly) (interchain with G-Cter in SUMO2)). 2 consecutive C2H2-type zinc fingers follow at residues 1188–1211 (YQYP…LSQH) and 1217–1240 (ICCP…THLH). The disordered stretch occupies residues 1271–1339 (APEKSEQDPP…EWNKTSSKDV (69 aa)). The segment covering 1297-1326 (VDDKSMSGLEDSKVGVEIKNEEQKPAKEPV) has biased composition (basic and acidic residues). Lys1315 is covalently cross-linked (Glycyl lysine isopeptide (Lys-Gly) (interchain with G-Cter in SUMO2)). 2 consecutive C2H2-type zinc fingers follow at residues 1368–1390 (YRCN…SQYH) and 1396–1419 (TMCT…EAGH). Residues 1467–1492 (EGKASPVESDGSSIPDDLGLEPKRTL) are disordered. The segment at 1512–1538 (YKCTVCKESFTQKNILLVHYNSVSHLH) adopts a C2H2-type 12 zinc-finger fold. A Glycyl lysine isopeptide (Lys-Gly) (interchain with G-Cter in SUMO2) cross-link involves residue Lys1562. A C2H2-type 13 zinc finger spans residues 1564–1588 (YKCSTCSVAYSQSSTLEIHMRSVLH). A disordered region spans residues 1779–1873 (PQLQPQNQQP…CIPPPRIASG (95 aa)). Over residues 1792–1808 (QQQQPQQQPSKLLKQEQ) the composition is skewed to low complexity. Lys1805 is covalently cross-linked (Glycyl lysine isopeptide (Lys-Gly) (interchain with G-Cter in SUMO2)). A compositionally biased stretch (basic and acidic residues) spans 1823 to 1860 (PSYKEAEEVTEKQEKPKQEFINDTEGLKDSKDIKKQKS). Residues 1916 to 1939 (LECGICGKLFSNVLILKSHQEHVH) form a C2H2-type 14 zinc finger. The tract at residues 1984 to 2006 (KIPNTVSAPLQAPPPTPPSAPQQ) is disordered. Positions 1994 to 2003 (QAPPPTPPSA) are enriched in pro residues. 2 consecutive DNA-binding regions (homeobox) follow at residues 2069–2128 (FKRP…RQRN) and 2166–2225 (KRSS…RKSY). The C2H2-type 15; degenerate zinc finger occupies 2252–2276 (YQCKKCNVVFPRIFDLITHQKKQCY). A compositionally biased stretch (polar residues) spans 2318–2331 (TLVASSGSGTSTPL). The interval 2318–2412 (TLVASSGSGT…SQTPIPSSPL (95 aa)) is disordered. The segment covering 2337 to 2355 (PEPEKNSPKTEYPGEKTKQ) has biased composition (basic and acidic residues). Residues 2356–2376 (SDPSLPQGTKSAPSSVLTSSE) are compositionally biased toward polar residues. Pro residues predominate over residues 2383 to 2392 (PQPPTQPPKQ). Residues 2401 to 2412 (SASQTPIPSSPL) show a composition bias toward polar residues. The C2H2-type 16 zinc finger occupies 2430–2452 (YPCDQCTLAFPTLELWKEHQHMH). Over residues 2490-2508 (GSSLTQMPPQTSTAHTTAP) the composition is skewed to polar residues. Residues 2490-2545 (GSSLTQMPPQTSTAHTTAPASVAASLKRKLEDKEDNNCSEKEGGNSGEDQHRDKRL) are disordered. Over residues 2517–2541 (RKLEDKEDNNCSEKEGGNSGEDQHR) the composition is skewed to basic and acidic residues. Positions 2542–2601 (DKRLRTTITPEQLEILYEKYLLDSNPTRKMLDHIAREVGLKKRVVQVWFQNTRARERKGQ) form a DNA-binding region, homeobox 3. The C2H2-type 17 zinc finger occupies 2612 to 2635 (KRCPFCRALFKAKSALESHIRSRH). A Phosphoserine modification is found at Ser2645. 2 disordered regions span residues 2746–2791 (AISD…ATTP) and 2810–2866 (HFND…PGHK). A compositionally biased stretch (polar residues) spans 2781–2791 (LDSLQKPATTP). Positions 2811–2820 (FNDKDGDHDQ) are enriched in basic and acidic residues. Low complexity predominate over residues 2843-2855 (PSSPNPFGSSNPF). The homeobox 4 DNA-binding region spans 2865–2924 (HKRFRTQMSNLQLKVLKACFSDYRTPTMQECEMLGNEIGLPKRVVQVWFQNARAKERKFK). The C2H2-type 18 zinc finger occupies 2943–2967 (PECTLCGVKYSARLSIRDHIFSKQH). Disordered regions lie at residues 3051–3156 (PSSL…EEKI) and 3261–3318 (QDSL…VQLD). Positions 3058–3068 (PQNSNTLTSPG) are enriched in polar residues. The span at 3075 to 3088 (PSSATSSPALSLSS) shows a compositional bias: low complexity. The span at 3097 to 3109 (TPPPPPPPPPPPS) shows a compositional bias: pro residues. Residues 3136 to 3156 (IKEEESEAIKPEKHPKKEEKI) show a composition bias toward basic and acidic residues. Lys3137 participates in a covalent cross-link: Glycyl lysine isopeptide (Lys-Gly) (interchain with G-Cter in SUMO2). Positions 3248-3277 (ALLQQYQQYQQSLQDSLQKQQKQQQEQQQK) form a coiled coil. Low complexity predominate over residues 3261 to 3276 (QDSLQKQQKQQQEQQQ). The span at 3298–3318 (SETKEEKSTAPESTKEEVQLD) shows a compositional bias: basic and acidic residues. The C2H2-type 19; degenerate zinc-finger motif lies at 3337-3361 (FVCRKCQMMFTDEDATVNHQKSFCY). The segment at 3381–3405 (YQCLACDLALSGNEALSQHLQSSLH) adopts a C2H2-type 20 zinc-finger fold. Residues 3424–3445 (LPHSVCSPPPNTSSTSPSAASS) form a disordered region. Residues 3435 to 3445 (TSSTSPSAASS) are compositionally biased toward low complexity.

It belongs to the krueppel C2H2-type zinc-finger protein family. In terms of tissue distribution, expressed in brain, heart, lung, muscle and small intestine. No expression detected in undifferentiated P19 cells, however, expression was seen following retinoic acid treatment to induce neuronal differentiation. Expressed in undifferentiated C2C12 cells, following induction of muscle differentiation in a low-serum medium, expression levels were decreased.

Its subcellular location is the nucleus. In terms of biological role, may play a role in neural and muscle differentiation. May be involved in transcriptional regulation. In Mus musculus (Mouse), this protein is Zinc finger homeobox protein 4 (Zfhx4).